A 510-amino-acid polypeptide reads, in one-letter code: Propionyl-CoA carboxylase beta chain (510 aa).

Positions 1 to 257 (MKDILEQLED…NNREKPPVRP (257 aa)) constitute a CoA carboxyltransferase N-terminal domain. The segment at 1–504 (MKDILEQLED…NKSVQMPWKK (504 aa)) is carboxyltransferase. The CoA carboxyltransferase C-terminal domain occupies 261–504 (DPDRIEPSLD…NKSVQMPWKK (244 aa)). An acyl-CoA binding region spans residues 292-325 (DEGDFYEIQEEFAKNIITGFIRLEGRTVGVVANQ).

This sequence belongs to the AccD/PCCB family. As to quaternary structure, the holoenzyme is a dodecamer composed of 6 PccA/alpha subunits and 6 PccB/beta subunits.

The enzyme catalyses propanoyl-CoA + hydrogencarbonate + ATP = (S)-methylmalonyl-CoA + ADP + phosphate + H(+). It participates in metabolic intermediate metabolism; propanoyl-CoA degradation; succinyl-CoA from propanoyl-CoA: step 1/3. In terms of biological role, this is one of the 2 subunits of the biotin-dependent propionyl-CoA carboxylase (PCC), the enzyme catalyzing the carboxylation of propionyl-CoA/propanoyl-CoA to D-methylmalonyl-CoA/(S)-methylmalonyl-CoA. Within the holoenzyme, the alpha subunit catalyzes the ATP-dependent carboxylation of the biotin carried by the biotin carboxyl carrier (BCC) domain, while the beta subunit then tranfers the carboxyl group from carboxylated biotin to propionyl-CoA. This is Propionyl-CoA carboxylase beta chain from Roseobacter denitrificans (strain ATCC 33942 / OCh 114) (Erythrobacter sp. (strain OCh 114)).